Here is a 126-residue protein sequence, read N- to C-terminus: Large ribosomal subunit protein uL22 (126 aa).

It belongs to the universal ribosomal protein uL22 family. As to quaternary structure, part of the 50S ribosomal subunit.

Functionally, this protein binds specifically to 23S rRNA; its binding is stimulated by other ribosomal proteins, e.g. L4, L17, and L20. It is important during the early stages of 50S assembly. It makes multiple contacts with different domains of the 23S rRNA in the assembled 50S subunit and ribosome. Its function is as follows. The globular domain of the protein is located near the polypeptide exit tunnel on the outside of the subunit, while an extended beta-hairpin is found that lines the wall of the exit tunnel in the center of the 70S ribosome. The sequence is that of Large ribosomal subunit protein uL22 from Bradyrhizobium sp. (strain BTAi1 / ATCC BAA-1182).